Consider the following 25-residue polypeptide: Retinol-binding protein 3 (25 aa).

It localises to the secreted. The protein localises to the extracellular space. The protein resides in the extracellular matrix. It is found in the interphotoreceptor matrix. Functionally, IRBP shuttles 11-cis and all trans retinoids between the retinol isomerase in the pigment epithelium and the visual pigments in the photoreceptor cells of the retina. This chain is Retinol-binding protein 3 (RBP3), found in Sus scrofa (Pig).